Consider the following 384-residue polypeptide: tRNA 2-selenouridine synthase (384 aa).

Residues 15–138 (FVAGKPLIDL…MRQYLIGVIE (124 aa)) enclose the Rhodanese domain. The active-site S-selanylcysteine intermediate is C98.

This sequence belongs to the SelU family. Monomer.

It carries out the reaction 5-methylaminomethyl-2-thiouridine(34) in tRNA + selenophosphate + (2E)-geranyl diphosphate + H2O + H(+) = 5-methylaminomethyl-2-selenouridine(34) in tRNA + (2E)-thiogeraniol + phosphate + diphosphate. The enzyme catalyses 5-methylaminomethyl-2-thiouridine(34) in tRNA + (2E)-geranyl diphosphate = 5-methylaminomethyl-S-(2E)-geranyl-thiouridine(34) in tRNA + diphosphate. It catalyses the reaction 5-methylaminomethyl-S-(2E)-geranyl-thiouridine(34) in tRNA + selenophosphate + H(+) = 5-methylaminomethyl-2-(Se-phospho)selenouridine(34) in tRNA + (2E)-thiogeraniol. The catalysed reaction is 5-methylaminomethyl-2-(Se-phospho)selenouridine(34) in tRNA + H2O = 5-methylaminomethyl-2-selenouridine(34) in tRNA + phosphate. Functionally, involved in the post-transcriptional modification of the uridine at the wobble position (U34) of tRNA(Lys), tRNA(Glu) and tRNA(Gln). Catalyzes the conversion of 2-thiouridine (S2U-RNA) to 2-selenouridine (Se2U-RNA). Acts in a two-step process involving geranylation of 2-thiouridine (S2U) to S-geranyl-2-thiouridine (geS2U) and subsequent selenation of the latter derivative to 2-selenouridine (Se2U) in the tRNA chain. The polypeptide is tRNA 2-selenouridine synthase (Shewanella sp. (strain MR-4)).